Here is a 753-residue protein sequence, read N- to C-terminus: Neuroendocrine convertase 1 (753 aa).

The signal sequence occupies residues 1–27; it reads MGRRAWTLQCTAFSLFCAWCAMNSVKA. The propeptide occupies 28–110; the sequence is KKQFVNEWAA…QQYEKERSKR (83 aa). Residues 129-450 enclose the Peptidase S8 domain; that stretch reads QWYLQDTRMT…FGLLNAKALV (322 aa). Catalysis depends on Asp-167, which acts as the Charge relay system. A glycan (N-linked (GlcNAc...) asparagine) is linked at Asn-173. His-208 (charge relay system) is an active-site residue. 2 disulfides stabilise this stretch: Cys-225/Cys-374 and Cys-317/Cys-347. Ser-382 (charge relay system) is an active-site residue. A glycan (N-linked (GlcNAc...) asparagine) is linked at Asn-401. Residues 460–597 form the P/Homo B domain; the sequence is SVPEKKECVV…KLILHGTSSQ (138 aa). Cys-467 and Cys-494 are disulfide-bonded. Disordered regions lie at residues 617 to 657 and 676 to 695; these read RRGV…RRDE and SKNSPSKQSPKKPPSAKPNI.

This sequence belongs to the peptidase S8 family. Furin subfamily. Ca(2+) serves as cofactor.

It localises to the cytoplasmic vesicle. The protein localises to the secretory vesicle. The enzyme catalyses Release of protein hormones, neuropeptides and renin from their precursors, generally by hydrolysis of -Lys-Arg-|- bonds.. Involved in the processing of hormone and other protein precursors at sites comprised of pairs of basic amino acid residues. Substrates include POMC, renin, enkephalin, dynorphin, somatostatin, insulin and AGRP. The protein is Neuroendocrine convertase 1 (PCSK1) of Bos taurus (Bovine).